Reading from the N-terminus, the 289-residue chain is Diaminopimelate epimerase (289 aa).

2 residues coordinate substrate: Asn11 and Asn78. Cys87 acts as the Proton donor in catalysis. Residues 88–89 (GN), Asn163, Asn199, and 217–218 (ER) each bind substrate. Cys226 acts as the Proton acceptor in catalysis. 227–228 (GT) contacts substrate.

This sequence belongs to the diaminopimelate epimerase family. Homodimer.

Its subcellular location is the cytoplasm. The catalysed reaction is (2S,6S)-2,6-diaminopimelate = meso-2,6-diaminopimelate. It functions in the pathway amino-acid biosynthesis; L-lysine biosynthesis via DAP pathway; DL-2,6-diaminopimelate from LL-2,6-diaminopimelate: step 1/1. In terms of biological role, catalyzes the stereoinversion of LL-2,6-diaminopimelate (L,L-DAP) to meso-diaminopimelate (meso-DAP), a precursor of L-lysine and an essential component of the bacterial peptidoglycan. The polypeptide is Diaminopimelate epimerase (Mycobacterium bovis (strain ATCC BAA-935 / AF2122/97)).